The following is a 278-amino-acid chain: MKTKTDFLKMKEQGEPITMLTAYDYPSAKLAEEAEVDMILVGDSLGMVVLGYDSTVPVTVEDMIHHTKAVRRGAKETFIVTDMPFMSYHVSPQDTMVNARRIVQESGAHALKVEGAGEVISTIHYLTSAGIPVVAHLGLTPQSVGVLGGYKVQGKDAESAKKLIEDAKRCEEAGAIALVLECVPMQLAKFISKQLTIPTIGIGAGQKVDGQVLVYHDLISYGVNRVPKFVKQYTSVQEEIVRGISQYVTEVKTGQFPEEKHSFTMKEEECLALYGGKQ.

The Mg(2+) site is built by D43 and D82. 3-methyl-2-oxobutanoate-binding positions include D43–S44, D82, and K112. Residue E114 coordinates Mg(2+). The Proton acceptor role is filled by E181.

The protein belongs to the PanB family. In terms of assembly, homodecamer; pentamer of dimers. It depends on Mg(2+) as a cofactor.

The protein localises to the cytoplasm. It carries out the reaction 3-methyl-2-oxobutanoate + (6R)-5,10-methylene-5,6,7,8-tetrahydrofolate + H2O = 2-dehydropantoate + (6S)-5,6,7,8-tetrahydrofolate. The protein operates within cofactor biosynthesis; (R)-pantothenate biosynthesis; (R)-pantoate from 3-methyl-2-oxobutanoate: step 1/2. Functionally, catalyzes the reversible reaction in which hydroxymethyl group from 5,10-methylenetetrahydrofolate is transferred onto alpha-ketoisovalerate to form ketopantoate. The polypeptide is 3-methyl-2-oxobutanoate hydroxymethyltransferase (Bacillus cereus (strain AH187)).